The sequence spans 572 residues: Beta-fructofuranosidase, insoluble isoenzyme CWINV5 (572 aa).

Positions 1 to 23 (MANIVWCNIAMFLLVSLFLTDDA) are cleaved as a signal peptide. Substrate is bound by residues 54 to 57 (WMND) and Gln73. The active site involves Asp57. A glycan (N-linked (GlcNAc...) asparagine) is linked at Asn84. 118-119 (WS) lines the substrate pocket. Asn152 and Asn179 each carry an N-linked (GlcNAc...) asparagine glycan. Substrate-binding positions include 184–185 (RD) and Glu239. N-linked (GlcNAc...) asparagine glycans are attached at residues Asn333 and Asn438. An intrachain disulfide couples Cys434 to Cys481.

The protein belongs to the glycosyl hydrolase 32 family. In terms of tissue distribution, expressed in flowers, and, to a lower extent, in leaves.

The protein resides in the secreted. It is found in the extracellular space. It localises to the apoplast. The protein localises to the cell wall. It carries out the reaction Hydrolysis of terminal non-reducing beta-D-fructofuranoside residues in beta-D-fructofuranosides.. This chain is Beta-fructofuranosidase, insoluble isoenzyme CWINV5 (CWINV5), found in Arabidopsis thaliana (Mouse-ear cress).